The chain runs to 115 residues: Large ribosomal subunit protein uL18 (115 aa).

Belongs to the universal ribosomal protein uL18 family. In terms of assembly, part of the 50S ribosomal subunit; part of the 5S rRNA/L5/L18/L25 subcomplex. Contacts the 5S and 23S rRNAs.

Functionally, this is one of the proteins that bind and probably mediate the attachment of the 5S RNA into the large ribosomal subunit, where it forms part of the central protuberance. The polypeptide is Large ribosomal subunit protein uL18 (Baumannia cicadellinicola subsp. Homalodisca coagulata).